The sequence spans 1320 residues: MDFISASSLSSPFSTQLSPIYLSSGIVSLKPRHRVKNRNFGSRESNNKSRKIVPIRGCFGFSGSFLRSKQSDYGSEAVSESLRLCGEGNELVLSSEYNSAKTRESVIQFVTKPLVYALFCIAIGLSPIRSFQAPALAVPFVSDVIWKKKKERVREKEVVLKAVDHEFSDYTRRLLETVSVLLKTIEIVRKENGEVAEVGAALDAVKVEKEKLQKEIMSGLYRDMRRLRKERDLLMKRADKIVDEALSLKKQSEKLLRKGAREKMEKLEESVDIMESEYNKIWERIDEIDDIILKKETTTLSFGVRELIFIERECVELVKSFNRELNQKSFESVPESSITKLSRSEIKQELVNAQRKHLEQMILPNVLELEEVDPFFDRDSVDFSLRIKKRLEESKKLQRDLQNRIRKRMKKFGEEKLFVQKTPEGEAVKGFPEAEVKWMFGEKEVVVPKAIQLHLRHGWKKWQEEAKADLKQKLLEDVDFGKQYIAQRQEQVLLDRDRVVSKTWYNEDKSRWEMDPMAVPYAVSRKLIDSARIRHDYAVMYVALKGDDKEFYVDIKEYEMLFEKFGGFDALYLKMLACGIPTSVHLMWIPMSELSLQQQFLLVTRVVSRVFNALRKTQVVSNAKDTVLEKIRNINDDIMMAVVFPVIEFIIPYQLRLRLGMAWPEEIEQTVGSTWYLQWQSEAEMNFKSRNTEDFQWFLWFLIRSSIYGFVLYHVFRFLKRKVPRLLGYGPFRRDPNVRKFWRVKSYFTYRKRRIKQKRKAGIDPIKTAFDRMKRVKNPPIPLKNFASIESMREEINEVVAFLQNPKAFQEMGARAPRGVLIVGERGTGKTSLALAIAAEARVPVVNVEAQELEAGLWVGQSAANVRELFQTARDLAPVIIFVEDFDLFAGVRGKFVHTKQQDHESFINQLLVELDGFEKQDGVVLMATTRNHKQIDEALRRPGRMDRVFHLQSPTEMERERILHNAAEETMDRELVDLVDWRKVSEKTTLLRPIELKLVPMALESSAFRSKFLDTDELLSYVSWFATFSHIVPPWLRKTKVAKTMGKMLVNHLGLNLTKDDLENVVDLMEPYGQISNGIELLNPTVDWTRETKFPHAVWAAGRALITLLIPNFDVVENLWLEPSSWEGIGCTKITKVTSGGSAIGNTESRSYLEKKLVFCFGSHIASQMLLPPGDENFLSSSEITKAQEIATRMVLQYGWGPDDSPAVYYATNAVSALSMGNNHEYEMAGKVEKIYDLAYEKAKGMLLKNRRVLEKITEELLEFEILTHKDLERIVHENGGIREKEPFFLSGTNYNEALSRSFLDVGDPPETALLSAPT.

The transit peptide at 1–43 (MDFISASSLSSPFSTQLSPIYLSSGIVSLKPRHRVKNRNFGSR) directs the protein to the chloroplast. The next 3 membrane-spanning stretches (helical) occupy residues 571–591 (LYLK…WIPM), 633–653 (NIND…IIPY), and 695–715 (FQWF…LYHV). An ATP-binding site is contributed by 824 to 831 (GERGTGKT).

In the N-terminal section; belongs to the AAA ATPase family. It in the C-terminal section; belongs to the peptidase M41 family. As to quaternary structure, oligomer.

Its subcellular location is the plastid. The protein resides in the chloroplast membrane. Its function is as follows. Required for plastid development during embryogenesis. Might be involved in chaperone functions or play a structural role in the thylakoid FtsH complex. The protein is Probable inactive ATP-dependent zinc metalloprotease FTSHI 5, chloroplastic of Arabidopsis thaliana (Mouse-ear cress).